The following is a 523-amino-acid chain: MAALRRFLWPPPRLSPALAPQQPFLSPWGRPAGTAPGMSGRPFSCREEDEGAVAEAAWRRRRWGELSIAAAAGGGLVGLVCYQLYGDPRADPSELAAPELEDPPRGRGLLPIPVAAAKETVATGRAITEDLDLYATSRERRFRLFASIECEGQLFMTPYDFILAVTTDEPKFAKTWKSLSKQELSQMLSETPPVWKGSSKLFRNLKERGVISYTEYLFLLCILTKPHAGFRIAFNMFDTDGNEMVDKKEFLVLQEIFRKKNEKRETKGDEEKRAMLRLQLYGYHSPTNSVLKTDAGELVSRSYWDTLRRSTSQALFSDLAERADDITSLVADTTLLVHFFGKKGKAELNFEDFYRFMDNLQTEVLEIEFLSYSNGMNTISEEDFAHILLRYTNVENTSVFLENVRYSISEEKGITFDEFRSFFQFLNNLEDFAIALNMYNFASRSIGQDEFKRAVYVATGLKLSPHLVNTVFKIFDVDKDDQLSYKEFIGIMKDRLHRGFRGYKTVQKYPTFKSCLKKELHSR.

The N-terminal 6 residues, methionine 1 to arginine 6, are a transit peptide targeting the mitochondrion. Residues proline 226 to asparagine 261 enclose the EF-hand 1 domain. Residues aspartate 238, aspartate 240, asparagine 242, methionine 244, aspartate 246, and glutamate 249 each contribute to the Ca(2+) site. Residues glutamate 395–glutamate 430 enclose the EF-hand 2; degenerate domain. Residues serine 464–glycine 499 enclose the EF-hand 3 domain. Residues aspartate 476, aspartate 478, aspartate 480, glutamine 482, and glutamate 487 each coordinate Ca(2+).

This sequence belongs to the MICU1 family. MICU3 subfamily. As to quaternary structure, heterodimer; disulfide-linked; heterodimerizes with MICU1. Heterodimerizes with isoform 3 of MICU1 (MICU1.1) in skeletal muscle. Component of the uniplex complex, composed of MCU, EMRE/SMDT1, MICU1 and MICU3 in a 4:4:1:1 stoichiometry. Predominantly expressed in skeletal muscle and central nervous system.

It is found in the mitochondrion intermembrane space. The protein localises to the mitochondrion inner membrane. Tissue-specific calcium sensor of the mitochondrial calcium uniporter (MCU) channel, which specifically regulates MCU channel activity in the central nervous system and skeletal muscle. Senses calcium level via its EF-hand domains: compared to MICU1 and MICU2, MICU3 has a higher affinity for calcium. MICU1 and MICU3 form a disulfide-linked heterodimer that stimulates and inhibits MCU activity, depending on the concentration of calcium. At low calcium levels, MICU1 occludes the pore of the MCU channel, preventing mitochondrial calcium uptake. At higher calcium levels, calcium-binding to MICU1 and MICU3 induces a conformational change that weakens MCU-MICU1 interactions and moves the MICU1-MICU3 heterodimer away from the pore, allowing calcium permeation through the MCU channel. The high calcium affinity of MICU3 lowers the calcium threshold necessary for calcium permeation through the MCU channel. The MICU1-MICU3 heterodimer promotes flexibility of neurotransmission in neuronal cells by enhancing mitochondrial calcium uptake in presynapses. It is also required to increase mitochondrial calcium uptake in skeletal muscle cells, thereby increasing ATP production. The chain is Calcium uptake protein 3, mitochondrial from Mus musculus (Mouse).